A 133-amino-acid polypeptide reads, in one-letter code: Putative pre-16S rRNA nuclease (133 aa).

Belongs to the YqgF nuclease family.

The protein localises to the cytoplasm. Its function is as follows. Could be a nuclease involved in processing of the 5'-end of pre-16S rRNA. The protein is Putative pre-16S rRNA nuclease of Bordetella bronchiseptica (strain ATCC BAA-588 / NCTC 13252 / RB50) (Alcaligenes bronchisepticus).